The sequence spans 632 residues: 2-oxoacid:ferredoxin oxidoreductase subunit alpha (632 aa).

Residues 253–257 carry the YPITP motif motif; sequence YPITP. Positions 256 and 344 each coordinate substrate.

In terms of assembly, heterodimer composed of an alpha and a beta subunit.

Its subcellular location is the cytoplasm. It carries out the reaction a 2-oxocarboxylate + 2 oxidized [2Fe-2S]-[ferredoxin] + CoA = an acyl-CoA + 2 reduced [2Fe-2S]-[ferredoxin] + CO2 + H(+). Its function is as follows. Catalyzes the coenzyme A-dependent oxidative decarboxylation of different 2-oxoacids such as 2-oxoglutarate, pyruvate and 2-oxobutyrate to form their CoA derivatives. This is 2-oxoacid:ferredoxin oxidoreductase subunit alpha from Sulfolobus sp.